A 149-amino-acid chain; its full sequence is uncharacterized protein (149 aa).

The region spanning 2–146 (LEVKTISVED…NHIVMYKTLR (145 aa)) is the N-acetyltransferase domain.

Belongs to the acetyltransferase family.

This is an uncharacterized protein from Bacillus subtilis (strain 168).